The primary structure comprises 656 residues: Acyl-CoA-binding domain-containing protein 6 (656 aa).

Residues 8–102 form the ACB domain; it reads YPDRFYAAAA…LEEEDPGWYS (95 aa). An acyl-CoA-binding positions include 44–48 and lysine 70; that span reads YGLYQ. The interval 129–148 is disordered; sequence ASTNGTSVPEPKTISENGSS. Kelch repeat units lie at residues 194-241, 254-304, 305-354, 356-405, 406-454, and 461-507; these read KMYI…AQVS, KFFS…LVGT, TLVL…CHAD, YLLI…TVGE, NWYI…LVHS, and YLIS…EPEV. A coiled-coil region spans residues 527 to 636; it reads LKKDDANELL…EQAALEAKQR (110 aa). A disordered region spans residues 627–656; it reads EQAALEAKQRQSSSGMWGWLVGTPPDKSES.

It belongs to the ACBP family. As to expression, highly expressed in leaves. Expressed in roots and seeds.

The protein localises to the peroxisome. In terms of biological role, binds medium- and long-chain acyl-CoA esters with high affinity. Can interact in vitro with linoleoyl-CoA and linolenoyl-CoA. Binds phosphatidic acid (PA) and phosphatidylcholine (PC) in vitro. May play a role in the biosynthesis of phospholipids. May be involved in lipid degradation via peroxisomal beta-oxydation. This Oryza sativa subsp. japonica (Rice) protein is Acyl-CoA-binding domain-containing protein 6.